Reading from the N-terminus, the 106-residue chain is COX assembly mitochondrial protein homolog (106 aa).

A2 bears the N-acetylalanine mark. Residues 28-71 form the CHCH domain; the sequence is RERCSEQVEDFTRCCKDSGILMVLKCRKENSALKDCLTAYYNDP. Short sequence motifs (cx9C motif) lie at residues 31 to 41 and 53 to 63; these read CSEQVEDFTRC and CRKENSALKDC. 2 cysteine pairs are disulfide-bonded: C31–C63 and C41–C53.

Belongs to the CMC family. Component of the MITRAC (mitochondrial translation regulation assembly intermediate of cytochrome c oxidase complex) complex, the core components of this complex being COA3/MITRAC12 and COX14.

It is found in the mitochondrion. In terms of biological role, component of the MITRAC (mitochondrial translation regulation assembly intermediate of cytochrome c oxidase complex) complex, that regulates cytochrome c oxidase assembly. This Mus musculus (Mouse) protein is COX assembly mitochondrial protein homolog (Cmc1).